A 276-amino-acid chain; its full sequence is Probable ribose-5-phosphate isomerase 3, chloroplastic (276 aa).

The transit peptide at 1–39 (MASLSFVSSSHLTLRTPSIALRSTGSSPRTSVSFSVKAQ) directs the protein to the chloroplast. S40 carries the post-translational modification N-acetylserine. At S108 the chain carries Phosphoserine.

This sequence belongs to the ribose 5-phosphate isomerase family. In terms of processing, phosphorylated by SRK2C.

The protein localises to the plastid. It is found in the chloroplast. The catalysed reaction is aldehydo-D-ribose 5-phosphate = D-ribulose 5-phosphate. The protein operates within carbohydrate degradation; pentose phosphate pathway; D-ribose 5-phosphate from D-ribulose 5-phosphate (non-oxidative stage): step 1/1. Catalyzes the reversible conversion of ribose-5-phosphate to ribulose 5-phosphate. This is Probable ribose-5-phosphate isomerase 3, chloroplastic (RPI3) from Arabidopsis thaliana (Mouse-ear cress).